We begin with the raw amino-acid sequence, 542 residues long: Protein OS-9 homolog (542 aa).

The first 21 residues, 1–21, serve as a signal peptide directing secretion; that stretch reads MQAKIIYALSAISALIPLGSS. Residues asparagine 52 and asparagine 74 are each glycosylated (N-linked (GlcNAc...) asparagine). Cystine bridges form between cysteine 70-cysteine 258, cysteine 117-cysteine 130, cysteine 193-cysteine 227, and cysteine 208-cysteine 239. The region spanning 115-241 is the MRH domain; sequence ERCIFYQAGF…QVTIPELCNL (127 aa). Residues tryptophan 125, glutamine 137, aspartate 194, arginine 200, glutamate 223, and tyrosine 229 each coordinate a mannooligosaccharide derivative. Asparagine 380 is a glycosylation site (N-linked (GlcNAc...) asparagine). Residues 497-528 form a disordered region; sequence NARMDDDESTSHTTRDIGEAGSQTTGNTESEV. Over residues 505–514 the composition is skewed to basic and acidic residues; that stretch reads STSHTTRDIG. Positions 517–528 are enriched in polar residues; that stretch reads GSQTTGNTESEV. A Prevents secretion from ER motif is present at residues 539–542; that stretch reads HDEL.

It belongs to the OS-9 family. In terms of assembly, homodimer. Component of the HRD1 ubiquitin ligase complex which contains the E3 ligase HRD1, its cofactors HRD3, USA1 and DER1, substrate recruiting factor YOS9 and CDC48-binding protein UBX2. Within the complex, interacts (via N-terminus) with HRD3. In ERAD-L, HRD3 and YOS9 jointly bind misfolded glycoproteins in the endoplasmic reticulum (ER) lumen. Movement of ERAD-L substrates through the ER membrane is facilitated by HRD1 and DER1 which have lateral gates facing each other and which distort the membrane region between the lateral gates, making it much thinner than a normal phospholipid bilayer. Substrates insert into the membrane as a hairpin loop with one strand interacting with DER1 and the other with HRD1. The HRD1 complex interacts with the heterotrimeric CDC48-NPL4-UFD1 ATPase complex which is recruited by UBX2 via its interaction with CDC48 and which moves ubiquitinated substrates to the cytosol for targeting to the proteasome. Interacts with KAR2 and EMP47. Interacts with misfolded ER lumenal proteins like PCR1. Interacts with the GPI-anchored proteins GAS1 and MKC7.

The protein resides in the endoplasmic reticulum membrane. Its function is as follows. Lectin involved in the quality control of the secretory pathway. As a member of the endoplasmic reticulum-associated degradation lumenal (ERAD-L) surveillance system, targets misfolded endoplasmic reticulum lumenal glycoproteins for degradation. The recognition of targets is N-glycan specific. Functions in recruiting misfolded protein substrates in conjunction with HRD3. This Saccharomyces cerevisiae (strain ATCC 204508 / S288c) (Baker's yeast) protein is Protein OS-9 homolog (YOS9).